The primary structure comprises 384 residues: Glutamate 5-kinase (384 aa).

Lys24 serves as a coordination point for ATP. Substrate-binding residues include Ser64, Asp149, and Asn161. ATP contacts are provided by residues 181–182 and 223–229; these read TD and TGGMRTK. A PUA domain is found at 288–370; the sequence is PGAILIDAGA…RDIQTLLGYT (83 aa).

It belongs to the glutamate 5-kinase family.

It localises to the cytoplasm. The catalysed reaction is L-glutamate + ATP = L-glutamyl 5-phosphate + ADP. It functions in the pathway amino-acid biosynthesis; L-proline biosynthesis; L-glutamate 5-semialdehyde from L-glutamate: step 1/2. In terms of biological role, catalyzes the transfer of a phosphate group to glutamate to form L-glutamate 5-phosphate. This chain is Glutamate 5-kinase, found in Xylella fastidiosa (strain M23).